The primary structure comprises 321 residues: Sideroflexin-3 (321 aa).

The residue at position 1 (Met1) is an N-acetylmethionine. 4 consecutive transmembrane segments (helical) span residues 146 to 164 (LGTA…ALGL), 174 to 194 (LVGR…NIPL), 225 to 245 (IFQV…IPPV), and 266 to 286 (LQVG…CALF).

This sequence belongs to the sideroflexin family.

Its subcellular location is the mitochondrion membrane. The enzyme catalyses L-serine(in) = L-serine(out). Its function is as follows. Mitochondrial serine transporter that mediates transport of serine into mitochondria, an important step of the one-carbon metabolism pathway. Mitochondrial serine is converted to glycine and formate, which then exits to the cytosol where it is used to generate the charged folates that serve as one-carbon donors. This is Sideroflexin-3 (Sfxn3) from Rattus norvegicus (Rat).